Consider the following 231-residue polypeptide: MQPRVILTDIEGTTSSISFVKNVLFPYARKALPAFVAEHGQQPEVRRWLDAVATEIGGACQDSLVAETLQGWIDQDRKHTALKALQGLIWDEGYRRGDYTAHFYPEVAPVLKGWHAAGLPLYVYSSGSVPAQKLFFGFSDAGDLSPLVSGWFDTEIGGKREADSYRRIVQAIGVPAGEIVFLSDVVEELDAAREAGLQTRLIDRLDDYPMPRIGQAANGHERVENFQQIQL.

Belongs to the HAD-like hydrolase superfamily. MasA/MtnC family. Monomer. It depends on Mg(2+) as a cofactor.

It catalyses the reaction 5-methylsulfanyl-2,3-dioxopentyl phosphate + H2O = 1,2-dihydroxy-5-(methylsulfanyl)pent-1-en-3-one + phosphate. Its pathway is amino-acid biosynthesis; L-methionine biosynthesis via salvage pathway; L-methionine from S-methyl-5-thio-alpha-D-ribose 1-phosphate: step 3/6. The protein operates within amino-acid biosynthesis; L-methionine biosynthesis via salvage pathway; L-methionine from S-methyl-5-thio-alpha-D-ribose 1-phosphate: step 4/6. Its function is as follows. Bifunctional enzyme that catalyzes the enolization of 2,3-diketo-5-methylthiopentyl-1-phosphate (DK-MTP-1-P) into the intermediate 2-hydroxy-3-keto-5-methylthiopentenyl-1-phosphate (HK-MTPenyl-1-P), which is then dephosphorylated to form the acireductone 1,2-dihydroxy-3-keto-5-methylthiopentene (DHK-MTPene). This chain is Enolase-phosphatase E1, found in Stenotrophomonas maltophilia (strain K279a).